A 518-amino-acid chain; its full sequence is Receptor-interacting serine/threonine-protein kinase 3 (518 aa).

The residue at position 2 (Ser2) is a Phosphoserine. Residues 21–287 (LENQELVGKG…ECLPKTDEVF (267 aa)) enclose the Protein kinase domain. 27–35 (VGKGGFGTV) serves as a coordination point for ATP. Residue Lys42 forms a Glycyl lysine isopeptide (Lys-Gly) (interchain with G-Cter in ubiquitin) linkage. ATP is bound at residue Lys50. Asp142 acts as the Proton acceptor in catalysis. Ser164 is modified (phosphoserine). Thr182 carries the phosphothreonine modification. 2 positions are modified to phosphoserine; by autocatalysis: Ser199 and Ser227. Thr252 is subject to Phosphothreonine. At Ser299 the chain carries Phosphoserine. Thr333 is modified (phosphothreonine). Residues Lys351 and Lys363 each participate in a glycyl lysine isopeptide (Lys-Gly) (interchain with G-Cter in ubiquitin) cross-link. Residues 355-443 (EEPPSSVPKK…WSCRTPEPNP (89 aa)) form a disordered region. Over residues 384-408 (TAGTSSDSMAQPPQTPETSTFRNQM) the composition is skewed to polar residues. A Phosphoserine modification is found at Ser389. Residue Thr401 is modified to Phosphothreonine. The RIP homotypic interaction motif (RHIM) signature appears at 450–466 (VNIYNCSGVQVGDNNYL). Residues 476-518 (TWGLAPSGKGRGLQHPPPVGSQEGPKDPEAWSRPQGWYNHSGK) form a disordered region. A Glycyl lysine isopeptide (Lys-Gly) (interchain with G-Cter in ubiquitin) cross-link involves residue Lys518.

The protein belongs to the protein kinase superfamily. TKL Ser/Thr protein kinase family. In terms of assembly, interacts (via RIP homotypic interaction motif) with RIPK1 (via RIP homotypic interaction motif); this interaction induces RIPK1 phosphorylation and formation of a RIPK1-RIPK3 necrosis-inducing complex. Interacts with MLKL; the interaction is direct and triggers necroptosis. Interacts with ZBP1 (via RIP homotypic interaction motif); interaction with ZBP1 activates RIPK3, triggering necroptosis. Upon TNF-induced necrosis, the RIPK1-RIPK3 dimer further interacts with PGAM5 and MLKL; the formation of this complex leads to PGAM5 phosphorylation and increase in PGAM5 phosphatase activity. Binds TRAF2 and is recruited to the TNFR-1 signaling complex. Interacts with PYGL, GLUL and GLUD1; these interactions result in activation of these metabolic enzymes. Interacts with BIRC2/c-IAP1, BIRC3/c-IAP2 and XIAP/BIRC4. Interacts with ARHGEF2. Interacts with PELI1 (via atypical FHA domain); the phosphorylated form at Thr-182 binds preferentially to PELI1. Interacts with BUB1B, TRAF2 and STUB1. Interacts with CASP6. Component of the AIM2 PANoptosome complex, a multiprotein complex that drives inflammatory cell death (PANoptosis). (Microbial infection) Interacts (via RIP homotypic interaction motif/RHIM) with herpes simplex virus 1/HHV-1 protein RIR1/ICP6 (via RHIM); this interaction may induce heteromeric amyloid assemblies and prevent necroptosis activation. As to quaternary structure, (Microbial infection) Interacts (via RIP homotypic interaction motif/RHIM) with herpes simplex virus 2/HHV-2 protein RIR1/ICP10 (via RHIM); this interaction prevents necroptosis activation. (Microbial infection) Proteolytically cleaved by S.flexneri OspD3 within the RIP homotypic interaction motif (RHIM), leading to its degradation and inhibition of necroptosis. In terms of processing, RIPK1 and RIPK3 undergo reciprocal auto- and trans-phosphorylation. Autophosphorylated following interaction with ZBP1. Phosphorylation of Ser-199 plays a role in the necroptotic function of RIPK3. Autophosphorylates at Ser-227 following activation by ZBP1: phosphorylation at these sites is a hallmark of necroptosis and is required for binding MLKL. Phosphorylation at Thr-182 is important for its kinase activity, interaction with PELI1 and PELI1-mediated 'Lys-48'-linked polyubiquitination and for its ability to mediate TNF-induced necroptosis. Post-translationally, polyubiquitinated with 'Lys-48' and 'Lys-63'-linked chains by BIRC2/c-IAP1 and BIRC3/c-IAP2, leading to activation of NF-kappa-B. Polyubiquitinated with 'Lys-48'-linked chains by PELI1 leading to its subsequent proteasome-dependent degradation. Ubiquitinated by STUB1 leading to its subsequent proteasome-dependent degradation. Deubiquitinated by USP22. As to expression, highly expressed in the pancreas. Detected at lower levels in heart, placenta, lung and kidney. In terms of tissue distribution, expression is significantly increased in colon and lung cancers.

It localises to the cytoplasm. The protein resides in the cytosol. The protein localises to the nucleus. It carries out the reaction L-seryl-[protein] + ATP = O-phospho-L-seryl-[protein] + ADP + H(+). The enzyme catalyses L-threonyl-[protein] + ATP = O-phospho-L-threonyl-[protein] + ADP + H(+). Its activity is regulated as follows. Activity is stimulated by ZBP1, which senses double-stranded Z-RNA structures. RIPK3-dependent necroptosis is inhibited by RIPK1: RIPK1 prevents the ZBP1-induced activation of RIPK3 via FADD-mediated recruitment of CASP8, which cleaves RIPK1 and limits TNF-induced necroptosis. Its function is as follows. Serine/threonine-protein kinase that activates necroptosis and apoptosis, two parallel forms of cell death. Necroptosis, a programmed cell death process in response to death-inducing TNF-alpha family members, is triggered by RIPK3 following activation by ZBP1. Activated RIPK3 forms a necrosis-inducing complex and mediates phosphorylation of MLKL, promoting MLKL localization to the plasma membrane and execution of programmed necrosis characterized by calcium influx and plasma membrane damage. In addition to TNF-induced necroptosis, necroptosis can also take place in the nucleus in response to orthomyxoviruses infection: following ZBP1 activation, which senses double-stranded Z-RNA structures, nuclear RIPK3 catalyzes phosphorylation and activation of MLKL, promoting disruption of the nuclear envelope and leakage of cellular DNA into the cytosol. Also regulates apoptosis: apoptosis depends on RIPK1, FADD and CASP8, and is independent of MLKL and RIPK3 kinase activity. Phosphorylates RIPK1: RIPK1 and RIPK3 undergo reciprocal auto- and trans-phosphorylation. In some cell types, also able to restrict viral replication by promoting cell death-independent responses. In response to Zika virus infection in neurons, promotes a cell death-independent pathway that restricts viral replication: together with ZBP1, promotes a death-independent transcriptional program that modifies the cellular metabolism via up-regulation expression of the enzyme ACOD1/IRG1 and production of the metabolite itaconate. Itaconate inhibits the activity of succinate dehydrogenase, generating a metabolic state in neurons that suppresses replication of viral genomes. RIPK3 binds to and enhances the activity of three metabolic enzymes: GLUL, GLUD1, and PYGL. These metabolic enzymes may eventually stimulate the tricarboxylic acid cycle and oxidative phosphorylation, which could result in enhanced ROS production. Functionally, (Microbial infection) In case of herpes simplex virus 1/HHV-1 infection, forms heteromeric amyloid structures with HHV-1 protein RIR1/ICP6 which may inhibit RIPK3-mediated necroptosis, thereby preventing host cell death pathway and allowing viral evasion. In Homo sapiens (Human), this protein is Receptor-interacting serine/threonine-protein kinase 3.